A 237-amino-acid polypeptide reads, in one-letter code: Pyridoxine 5'-phosphate synthase (237 aa).

3-amino-2-oxopropyl phosphate-binding residues include Asn7 and Arg18. His43 (proton acceptor) is an active-site residue. 1-deoxy-D-xylulose 5-phosphate is bound by residues Arg45 and His50. Residue Glu70 is the Proton acceptor of the active site. Residue Thr100 coordinates 1-deoxy-D-xylulose 5-phosphate. His190 serves as the catalytic Proton donor. 3-amino-2-oxopropyl phosphate contacts are provided by residues Asp191 and 213–214 (GH).

Belongs to the PNP synthase family. As to quaternary structure, homooctamer; tetramer of dimers.

Its subcellular location is the cytoplasm. The enzyme catalyses 3-amino-2-oxopropyl phosphate + 1-deoxy-D-xylulose 5-phosphate = pyridoxine 5'-phosphate + phosphate + 2 H2O + H(+). It functions in the pathway cofactor biosynthesis; pyridoxine 5'-phosphate biosynthesis; pyridoxine 5'-phosphate from D-erythrose 4-phosphate: step 5/5. Catalyzes the complicated ring closure reaction between the two acyclic compounds 1-deoxy-D-xylulose-5-phosphate (DXP) and 3-amino-2-oxopropyl phosphate (1-amino-acetone-3-phosphate or AAP) to form pyridoxine 5'-phosphate (PNP) and inorganic phosphate. This Flavobacterium johnsoniae (strain ATCC 17061 / DSM 2064 / JCM 8514 / BCRC 14874 / CCUG 350202 / NBRC 14942 / NCIMB 11054 / UW101) (Cytophaga johnsonae) protein is Pyridoxine 5'-phosphate synthase.